Here is a 734-residue protein sequence, read N- to C-terminus: Sulfate transporter (734 aa).

Basic and acidic residues predominate over residues 1–18 (MSLKNEDQNDLSPKDSVK). The interval 1–38 (MSLKNEDQNDLSPKDSVKGNDQYRAPSGIHLEPEEESR) is disordered. Phosphoserine occurs at positions 12 and 16. 2 consecutive transmembrane segments (helical) span residues 113 to 133 (VMSG…YSLL) and 138 to 158 (PIYG…LGTS). The N-linked (GlcNAc...) asparagine glycan is linked to Asn194. Transmembrane regions (helical) follow at residues 214–234 (IIVG…MGFF), 237–257 (GFVS…GASF), 379–399 (VDAI…SEMF), 415–435 (AIGF…SAAL), 453–473 (VMTA…FFSL), and 519–539 (LIST…CVIL). Residues 563–714 (AYKNLQAKSG…YSIYEAMTFA (152 aa)) form the STAS domain.

This sequence belongs to the SLC26A/SulP transporter (TC 2.A.53) family. In terms of processing, N-glycosylated.

It localises to the cell membrane. It is found in the apical cell membrane. It carries out the reaction oxalate(in) + sulfate(out) = oxalate(out) + sulfate(in). The enzyme catalyses sulfate(out) + 2 chloride(in) = sulfate(in) + 2 chloride(out). The catalysed reaction is oxalate(out) + 2 chloride(in) = oxalate(in) + 2 chloride(out). It catalyses the reaction bromide(in) + chloride(out) = bromide(out) + chloride(in). It carries out the reaction nitrate(in) + chloride(out) = nitrate(out) + chloride(in). The enzyme catalyses iodide(in) + chloride(out) = iodide(out) + chloride(in). Sulfate transporter which mediates sulfate uptake into chondrocytes in order to maintain adequate sulfation of proteoglycans which is needed for cartilage development. Mediates electroneutral anion exchange of sulfate ions for oxalate ions, sulfate and oxalate ions for chloride and/or hydroxyl ions and chloride ions for bromide, iodide and nitrate ions. The coupling of sulfate transport to both hydroxyl and chloride ions likely serves to ensure transport at both acidic pH when most sulfate uptake is mediated by sulfate-hydroxide exchange and alkaline pH when most sulfate uptake is mediated by sulfate-chloride exchange. Essential for chondrocyte proliferation, differentiation and cell size expansion. The polypeptide is Sulfate transporter (SLC26A2) (Bos taurus (Bovine)).